Reading from the N-terminus, the 400-residue chain is Subtilisin-like protease 2 (400 aa).

The signal sequence occupies residues 1–20 (MKFSQSLIALAACFLPLIAA). Residues 21–119 (APEEAQHAKI…IERDGKVQAN (99 aa)) constitute a propeptide that is removed on maturation. An Inhibitor I9 domain is found at 42–117 (SYIVVFNKGV…AWIERDGKVQ (76 aa)). N82 carries an N-linked (GlcNAc...) asparagine glycan. Residues 128–400 (TWGLGRISHK…NLIAYNGNGA (273 aa)) enclose the Peptidase S8 domain. Catalysis depends on charge relay system residues D160, H192, and S345.

It belongs to the peptidase S8 family.

It localises to the secreted. With respect to regulation, potently inhibited by the serine peptidase inhibitor chymostatin. Also inhibited by antpain and PMSF. Major secreted subtilisin-like serine endopeptidase. Preferentially cleaves substrates containing hydrophobic residues at P4, positively charged residues at P3, small or flexible residues at P2, and large, bulky residues at P1. Mediates the degradation of collagen, the major structural protein in the mammalian host. Degrades the nonhelical regions of collagen that function in the cross-linking of the helical components. May function as virulence factor involved in epidermal wing necrosis observed in white nose syndrome (WNS) in bats. The chain is Subtilisin-like protease 2 from Pseudogymnoascus destructans (strain ATCC MYA-4855 / 20631-21) (Bat white-nose syndrome fungus).